The chain runs to 317 residues: Melanocyte-stimulating hormone receptor (317 aa).

The Extracellular portion of the chain corresponds to 1 to 37; it reads MPVQGSQRRLLGSLNSTPTATPHLGLAANQTGARCLE. The N-linked (GlcNAc...) asparagine glycan is linked to Asn29. Residues 38-63 traverse the membrane as a helical segment; sequence VSIPDGLFLSLGLVSLVENVLVVTAI. Topologically, residues 64-72 are cytoplasmic; sequence AKNRNLHSP. A helical membrane pass occupies residues 73–93; the sequence is MYCFICCLALSDLLVSGSNML. Over 94–118 the chain is Extracellular; sequence ETAVILLLEAGALAARAAVVQQLDN. A helical membrane pass occupies residues 119 to 140; sequence VIDVITCSSMLSSLCFLGAIAV. The Cytoplasmic segment spans residues 141–163; the sequence is DRYISIFYALRYHSIVTLPRARR. A helical membrane pass occupies residues 164–183; that stretch reads AVAAIWVASVLFSMLFIAYY. Residues 184-191 are Extracellular-facing; sequence DHAAVLLC. The helical transmembrane segment at 192 to 211 threads the bilayer; sequence LVVFFLAMLVLMAVLYVHML. Residues 212–240 are Cytoplasmic-facing; that stretch reads ARACQHAQGIARLHKRQCPAHQGFGLKGA. Residues 241 to 266 form a helical membrane-spanning segment; the sequence is ATLTILLGIFFLCWGPFFLHLTLIVL. Topologically, residues 267 to 279 are extracellular; that stretch reads CPQHPTCSCIFKN. A helical transmembrane segment spans residues 280–300; sequence FNLFLALIICNAIIDPLIYAF. The Cytoplasmic segment spans residues 301–317; sequence RSQELRRTLKEVLLCSW. Residue Cys315 is the site of S-palmitoyl cysteine attachment.

It belongs to the G-protein coupled receptor 1 family. In terms of assembly, interacts with MGRN1, but does not undergo MGRN1-mediated ubiquitination; this interaction competes with GNAS-binding and thus inhibits agonist-induced cAMP production. Interacts with OPN3; the interaction results in a decrease in MC1R-mediated cAMP signaling and ultimately a decrease in melanin production in melanocytes.

The protein localises to the cell membrane. In terms of biological role, receptor for MSH (alpha, beta and gamma) and ACTH. The activity of this receptor is mediated by G proteins which activate adenylate cyclase. Mediates melanogenesis, the production of eumelanin (black/brown) and phaeomelanin (red/yellow), via regulation of cAMP signaling in melanocytes. The sequence is that of Melanocyte-stimulating hormone receptor (MC1R) from Chlorocebus aethiops (Green monkey).